A 256-amino-acid chain; its full sequence is Imidazole glycerol phosphate synthase subunit HisF (256 aa).

Residues aspartate 12 and aspartate 131 contribute to the active site.

This sequence belongs to the HisA/HisF family. In terms of assembly, heterodimer of HisH and HisF.

The protein localises to the cytoplasm. The enzyme catalyses 5-[(5-phospho-1-deoxy-D-ribulos-1-ylimino)methylamino]-1-(5-phospho-beta-D-ribosyl)imidazole-4-carboxamide + L-glutamine = D-erythro-1-(imidazol-4-yl)glycerol 3-phosphate + 5-amino-1-(5-phospho-beta-D-ribosyl)imidazole-4-carboxamide + L-glutamate + H(+). It participates in amino-acid biosynthesis; L-histidine biosynthesis; L-histidine from 5-phospho-alpha-D-ribose 1-diphosphate: step 5/9. Functionally, IGPS catalyzes the conversion of PRFAR and glutamine to IGP, AICAR and glutamate. The HisF subunit catalyzes the cyclization activity that produces IGP and AICAR from PRFAR using the ammonia provided by the HisH subunit. The chain is Imidazole glycerol phosphate synthase subunit HisF from Beutenbergia cavernae (strain ATCC BAA-8 / DSM 12333 / CCUG 43141 / JCM 11478 / NBRC 16432 / NCIMB 13614 / HKI 0122).